A 571-amino-acid polypeptide reads, in one-letter code: DNA primase (571 aa).

Residues 20 to 44 (CPFHKEKTPSFQVDTEKGYYHCFGC) form a CHC2-type zinc finger. Positions 229-309 (AELVVVEGYM…KFRVRATSVP (81 aa)) constitute a Toprim domain. 3 residues coordinate Mg(2+): E235, D280, and D282.

This sequence belongs to the DnaG primase family. As to quaternary structure, monomer. Interacts with DnaB. Zn(2+) serves as cofactor. It depends on Mg(2+) as a cofactor.

It carries out the reaction ssDNA + n NTP = ssDNA/pppN(pN)n-1 hybrid + (n-1) diphosphate.. RNA polymerase that catalyzes the synthesis of short RNA molecules used as primers for DNA polymerase during DNA replication. This chain is DNA primase, found in Deinococcus radiodurans (strain ATCC 13939 / DSM 20539 / JCM 16871 / CCUG 27074 / LMG 4051 / NBRC 15346 / NCIMB 9279 / VKM B-1422 / R1).